The sequence spans 106 residues: Ig kappa chain C region, A allele (106 aa).

The Ig-like domain maps to 5–102 (PTVSIFPPSM…SSSPVVKSFN (98 aa)). A disulfide bridge links cysteine 26 with cysteine 86.

This chain is Ig kappa chain C region, A allele, found in Rattus norvegicus (Rat).